Reading from the N-terminus, the 156-residue chain is Small ribosomal subunit protein uS7 (156 aa).

This sequence belongs to the universal ribosomal protein uS7 family. In terms of assembly, part of the 30S ribosomal subunit. Contacts proteins S9 and S11.

Functionally, one of the primary rRNA binding proteins, it binds directly to 16S rRNA where it nucleates assembly of the head domain of the 30S subunit. Is located at the subunit interface close to the decoding center, probably blocks exit of the E-site tRNA. The polypeptide is Small ribosomal subunit protein uS7 (Cellvibrio japonicus (strain Ueda107) (Pseudomonas fluorescens subsp. cellulosa)).